Here is a 384-residue protein sequence, read N- to C-terminus: Spermidine/putrescine import ATP-binding protein PotA (384 aa).

Positions Ile-6–Ile-238 constitute an ABC transporter domain. Gly-40–Ser-47 contacts ATP.

Belongs to the ABC transporter superfamily. Spermidine/putrescine importer (TC 3.A.1.11.1) family. As to quaternary structure, the complex is composed of two ATP-binding proteins (PotA), two transmembrane proteins (PotB and PotC) and a solute-binding protein (PotD).

Its subcellular location is the cell membrane. It catalyses the reaction ATP + H2O + polyamine-[polyamine-binding protein]Side 1 = ADP + phosphate + polyamineSide 2 + [polyamine-binding protein]Side 1.. Part of the ABC transporter complex PotABCD involved in spermidine/putrescine import. Responsible for energy coupling to the transport system. The sequence is that of Spermidine/putrescine import ATP-binding protein PotA from Streptococcus pyogenes serotype M18 (strain MGAS8232).